Consider the following 47-residue polypeptide: Gas vesicle protein A (47 aa).

Belongs to the gas vesicle GvpA family. In terms of assembly, the gas vesicle shell is 2 nm thick and consists of a single layer of this protein. It forms helical ribs nearly perpendicular to the long axis of the vesicle.

It localises to the gas vesicle shell. In terms of biological role, gas vesicles are hollow, gas filled proteinaceous nanostructures found in some microorganisms. During planktonic growth they allow positioning of the organism at a favorable depth for light or nutrient acquisition. GvpA forms the protein shell. This Dactylococcopsis salina (Myxobaktron salinum) protein is Gas vesicle protein A.